The sequence spans 217 residues: Cytochrome b5 domain-containing protein 1 (217 aa).

A Cytochrome b5 heme-binding domain is found at 6–72 (PRYFTPREVS…NPKTGDVKTH (67 aa)). Positions 41 and 72 each coordinate heme.

The protein belongs to the cytochrome b5 family.

It is found in the cytoplasm. The protein localises to the cytoskeleton. Its subcellular location is the cilium axoneme. Functionally, radial spoke stalk protein that binds heme under oxidizing conditions. Required for the coordinated beating of multiple cilia maybe by functioning in a redox signaling pathway. The polypeptide is Cytochrome b5 domain-containing protein 1 (cyb5d1) (Xenopus laevis (African clawed frog)).